We begin with the raw amino-acid sequence, 510 residues long: NAD(P)H-quinone oxidoreductase subunit 2 B, chloroplastic (510 aa).

13 consecutive transmembrane segments (helical) span residues 24–44 (LLLFHGSFIFPECILIFGLIL), 57–77 (IPWLYFISSTSLVMSITALLF), 99–119 (IFQFLILLCSTLCIPLSVEYI), 124–144 (MAITEFLLFVLTATLGGMFLC), 150–170 (ITIFVAPECFSLCSYLLSGYT), 183–203 (YLLMGGASSSILVHGFSWLYG), 227–247 (PGISIALISITVGIGFKLSPA), 295–315 (WHLLLEILAILSMILGNLIAI), 323–343 (MLAYSSIGQIGYVIIGIIVGD), 347–367 (GYASMITYMLFYISMNLGTFA), 395–415 (ALSSALCLLSLGGLPPLAGFF), 418–438 (LHLFWCGWQAGLYFLVSIGLL), and 484–504 (MIVCVIASTIPGISMNPIIAI).

This sequence belongs to the complex I subunit 2 family. As to quaternary structure, NDH is composed of at least 16 different subunits, 5 of which are encoded in the nucleus.

The protein resides in the plastid. Its subcellular location is the chloroplast thylakoid membrane. It carries out the reaction a plastoquinone + NADH + (n+1) H(+)(in) = a plastoquinol + NAD(+) + n H(+)(out). The catalysed reaction is a plastoquinone + NADPH + (n+1) H(+)(in) = a plastoquinol + NADP(+) + n H(+)(out). Its function is as follows. NDH shuttles electrons from NAD(P)H:plastoquinone, via FMN and iron-sulfur (Fe-S) centers, to quinones in the photosynthetic chain and possibly in a chloroplast respiratory chain. The immediate electron acceptor for the enzyme in this species is believed to be plastoquinone. Couples the redox reaction to proton translocation, and thus conserves the redox energy in a proton gradient. The protein is NAD(P)H-quinone oxidoreductase subunit 2 B, chloroplastic of Chloranthus spicatus (Chulantree).